The primary structure comprises 242 residues: Protein Thf1 (242 aa).

The stretch at 178-209 forms a coiled coil; it reads SSDKLQKDLDLYRSNLDKMQQLLTVIEDTLEA. A disordered region spans residues 212 to 242; sequence KKRASQKLEKKPEVVEEKEHKENEEQQQSSN. The span at 217 to 235 shows a compositional bias: basic and acidic residues; the sequence is QKLEKKPEVVEEKEHKENE.

It belongs to the THF1 family.

Functionally, may be involved in photosynthetic membrane biogenesis. In Crocosphaera subtropica (strain ATCC 51142 / BH68) (Cyanothece sp. (strain ATCC 51142)), this protein is Protein Thf1.